A 1314-amino-acid polypeptide reads, in one-letter code: Enfumafungin synthase efuA (1314 aa).

The segment at 1–680 (MPSYHNTDKT…RYIDKASRQG (680 aa)) is terpenne cyclase. PFTB repeat units follow at residues 19–62 (LQQA…ELSL) and 66–107 (GPEI…RILG). Transmembrane regions (helical) follow at residues 133-153 (FFTR…IPQM), 155-175 (AELI…SSWA), and 230-250 (YQWI…FGGL). The PFTB 3 repeat unit spans residues 260–300 (LKRCTAWLLEHQEESGDWAGFFPPIHGSIWALLLDGFSFQS). The Proton donor role is filled by D395. PFTB repeat units follow at residues 417-458 (VMNG…DSLV) and 546-597 (CMRT…LRFR). A glycosyltransferase region spans residues 681–1314 (IETLRIPSSS…ADSVLDIEEK (634 aa)). The helical transmembrane segment at 1200–1220 (AIVQLLYGFTTTILALFGWLK) threads the bilayer. The tract at residues 1289 to 1314 (DSGASESSRSSLDGGHADSVLDIEEK) is disordered. Low complexity predominate over residues 1292–1302 (ASESSRSSLDG).

In the N-terminal section; belongs to the terpene cyclase/mutase family. This sequence in the C-terminal section; belongs to the glycosyltransferase 28 family.

The protein resides in the membrane. Its pathway is secondary metabolite biosynthesis; terpenoid biosynthesis. Functionally, terpene cyclase-glycosyl transferase fusion protein; part of the gene cluster that mediates the biosynthesis of enfumafungin, a glycosylated fernene-type triterpenoid with potent antifungal activity, mediated by its interaction with beta-1,3-glucan synthase and the fungal cell wall. The pathway begins with the terpene cyclase-glycosyl transferase fusion protein that most likely uses 2,3-oxidosqualene as substrate and catalyzes glycosylation immediately after cyclization. The fernene glycoside then could be processed by the desaturase efuI which catalyzes isomerization of a double bond established by efuA to form the core structure. The latter would then undergo a series of hydroxylations in unknown order at C-2, C-19, C-23 and C-25, which would be catalyzed by two of the three cytochrome P450 monooxygenases efuB, efuG or efuH. The hydroxy-group at C-25 becomes oxidized by the dehydrogenase efuE to enable a spontaneous, non-enzymatic hemiacetal formation with C-23. After hydroxylation at C-2, acetylation by the acetyltransferase efuC takes place. The final steps in enfumafungin biosynthesis require expansion of the 5-membered ring by lactonization via a Baeyer-Villiger reaction mediated by one of the BGC's cytochrome P450 monooxygenases (efuB, efuG or efuH) followed by ring cleavage. This type of reaction would establish a double bond between C-20 and C-21 which could be reduced by the reductase efuL to form the final product. The chain is Enfumafungin synthase efuA from Hormonema carpetanum.